The chain runs to 493 residues: Probable cytosol aminopeptidase (493 aa).

Residues K257 and D262 each coordinate Mn(2+). K269 is a catalytic residue. Mn(2+) contacts are provided by D281, D341, and E343. R345 is a catalytic residue.

The protein belongs to the peptidase M17 family. The cofactor is Mn(2+).

The protein localises to the cytoplasm. It catalyses the reaction Release of an N-terminal amino acid, Xaa-|-Yaa-, in which Xaa is preferably Leu, but may be other amino acids including Pro although not Arg or Lys, and Yaa may be Pro. Amino acid amides and methyl esters are also readily hydrolyzed, but rates on arylamides are exceedingly low.. The enzyme catalyses Release of an N-terminal amino acid, preferentially leucine, but not glutamic or aspartic acids.. In terms of biological role, presumably involved in the processing and regular turnover of intracellular proteins. Catalyzes the removal of unsubstituted N-terminal amino acids from various peptides. This chain is Probable cytosol aminopeptidase, found in Synechococcus sp. (strain WH7803).